The primary structure comprises 312 residues: R2-like ligand binding oxidase (312 aa).

The Mn(2+) site is built by glutamate 68, glutamate 101, and histidine 104. A cross-link (3-(O4'-tyrosyl)-valine (Val-Tyr)) is located at residues 71-162 (VTQDIQPFMA…AAQVRASVTY (92 aa)). Glutamate 101 lines the Fe cation pocket. Residues glutamate 167, glutamate 202, and histidine 205 each coordinate Fe cation.

It belongs to the ribonucleoside diphosphate reductase small chain family. R2-like ligand binding oxidase subfamily. Homodimer. Fe cation is required as a cofactor. It depends on Mn(2+) as a cofactor.

Probable oxidase that might be involved in lipid metabolism. In Mycolicibacterium vanbaalenii (strain DSM 7251 / JCM 13017 / BCRC 16820 / KCTC 9966 / NRRL B-24157 / PYR-1) (Mycobacterium vanbaalenii), this protein is R2-like ligand binding oxidase.